A 798-amino-acid chain; its full sequence is Penicillin-binding protein 1A (798 aa).

The Cytoplasmic segment spans residues 1 to 9; sequence MIKKIVTTC. The chain crosses the membrane as a helical; Signal-anchor for type II membrane protein span at residues 10-30; that stretch reads FGLVLGLCVFGVGLVAIAILV. The Periplasmic portion of the chain corresponds to 31–798; the sequence is TYPKLPSLDS…SKQPQLDSLF (768 aa). The transglycosylase stretch occupies residues 50-218; the sequence is LTIYSADGEV…SAYNPIVNPE (169 aa). Catalysis depends on Glu-88, which acts as the Proton donor; for transglycosylase activity. Residues 414-700 are transpeptidase; it reads VVVQEPLLQA…GTIAVPVWVD (287 aa). Residue Ser-461 is the Acyl-ester intermediate; for transpeptidase activity of the active site. The segment at 751 to 798 is disordered; sequence SRRIREDKEAGAEDVERGAADEVRQEVQETPVLPSNTGSKQPQLDSLF. A compositionally biased stretch (basic and acidic residues) spans 753-777; that stretch reads RIREDKEAGAEDVERGAADEVRQEV. Residues 783–798 show a composition bias toward polar residues; that stretch reads LPSNTGSKQPQLDSLF.

This sequence in the N-terminal section; belongs to the glycosyltransferase 51 family. The protein in the C-terminal section; belongs to the transpeptidase family.

The protein localises to the cell inner membrane. It catalyses the reaction [GlcNAc-(1-&gt;4)-Mur2Ac(oyl-L-Ala-gamma-D-Glu-L-Lys-D-Ala-D-Ala)](n)-di-trans,octa-cis-undecaprenyl diphosphate + beta-D-GlcNAc-(1-&gt;4)-Mur2Ac(oyl-L-Ala-gamma-D-Glu-L-Lys-D-Ala-D-Ala)-di-trans,octa-cis-undecaprenyl diphosphate = [GlcNAc-(1-&gt;4)-Mur2Ac(oyl-L-Ala-gamma-D-Glu-L-Lys-D-Ala-D-Ala)](n+1)-di-trans,octa-cis-undecaprenyl diphosphate + di-trans,octa-cis-undecaprenyl diphosphate + H(+). The enzyme catalyses Preferential cleavage: (Ac)2-L-Lys-D-Ala-|-D-Ala. Also transpeptidation of peptidyl-alanyl moieties that are N-acyl substituents of D-alanine.. Its pathway is cell wall biogenesis; peptidoglycan biosynthesis. Functionally, cell wall formation. Synthesis of cross-linked peptidoglycan from the lipid intermediates. The enzyme has a penicillin-insensitive transglycosylase N-terminal domain (formation of linear glycan strands) and a penicillin-sensitive transpeptidase C-terminal domain (cross-linking of the peptide subunits). This is Penicillin-binding protein 1A (mrcA) from Neisseria cinerea.